A 178-amino-acid chain; its full sequence is Large ribosomal subunit protein uL6 (178 aa).

This sequence belongs to the universal ribosomal protein uL6 family. As to quaternary structure, part of the 50S ribosomal subunit.

In terms of biological role, this protein binds to the 23S rRNA, and is important in its secondary structure. It is located near the subunit interface in the base of the L7/L12 stalk, and near the tRNA binding site of the peptidyltransferase center. The chain is Large ribosomal subunit protein uL6 from Staphylococcus epidermidis (strain ATCC 35984 / DSM 28319 / BCRC 17069 / CCUG 31568 / BM 3577 / RP62A).